The primary structure comprises 291 residues: Putative heme-binding peroxidase (291 aa).

Catalysis depends on histidine 61, which acts as the Proton acceptor. Histidine 185 provides a ligand contact to heme b. Tryptophan 201 functions as the Tryptophan radical intermediate in the catalytic mechanism.

The protein belongs to the peroxidase family. Cytochrome c peroxidase subfamily. Requires heme b as cofactor.

Destroys radicals which are normally produced within the cells and which are toxic to biological systems. The chain is Putative heme-binding peroxidase (CCP2) from Candida albicans (strain SC5314 / ATCC MYA-2876) (Yeast).